The sequence spans 625 residues: 1-deoxy-D-xylulose-5-phosphate synthase (625 aa).

Residues histidine 80 and 121–123 (GHS) contribute to the thiamine diphosphate site. Aspartate 152 is a Mg(2+) binding site. Thiamine diphosphate contacts are provided by residues 153 to 154 (GA), asparagine 181, tyrosine 290, and glutamate 371. Residue asparagine 181 participates in Mg(2+) binding.

It belongs to the transketolase family. DXPS subfamily. As to quaternary structure, homodimer. Mg(2+) serves as cofactor. Thiamine diphosphate is required as a cofactor.

The enzyme catalyses D-glyceraldehyde 3-phosphate + pyruvate + H(+) = 1-deoxy-D-xylulose 5-phosphate + CO2. Its pathway is metabolic intermediate biosynthesis; 1-deoxy-D-xylulose 5-phosphate biosynthesis; 1-deoxy-D-xylulose 5-phosphate from D-glyceraldehyde 3-phosphate and pyruvate: step 1/1. In terms of biological role, catalyzes the acyloin condensation reaction between C atoms 2 and 3 of pyruvate and glyceraldehyde 3-phosphate to yield 1-deoxy-D-xylulose-5-phosphate (DXP). This is 1-deoxy-D-xylulose-5-phosphate synthase from Haemophilus influenzae (strain ATCC 51907 / DSM 11121 / KW20 / Rd).